We begin with the raw amino-acid sequence, 417 residues long: D-amino acid dehydrogenase (417 aa).

Residue 3–17 (IVVLGGGVVGVTSAW) participates in FAD binding.

The protein belongs to the DadA oxidoreductase family. FAD serves as cofactor.

It carries out the reaction a D-alpha-amino acid + A + H2O = a 2-oxocarboxylate + AH2 + NH4(+). Its pathway is amino-acid degradation; D-alanine degradation; NH(3) and pyruvate from D-alanine: step 1/1. In terms of biological role, oxidative deamination of D-amino acids. This Aeromonas hydrophila subsp. hydrophila (strain ATCC 7966 / DSM 30187 / BCRC 13018 / CCUG 14551 / JCM 1027 / KCTC 2358 / NCIMB 9240 / NCTC 8049) protein is D-amino acid dehydrogenase.